Here is a 576-residue protein sequence, read N- to C-terminus: Small ribosomal subunit protein mS80 (rPPR6) (576 aa).

A mitochondrion-targeting transit peptide spans 1–76; that stretch reads MLRSFLCRSQ…SLPADEIPIS (76 aa). PPR repeat units lie at residues 230-264, 265-299, 300-336, 341-370, 371-405, 406-440, 441-475, 476-510, and 511-546; these read NLEI…GFTP, NAKT…GVLS, EGEQ…SLPP, TLIT…ARRR, GIKP…GPAP, GNAV…GLKP, DVYT…HKKL, SPVT…GVQP, and NADE…GLHL.

This sequence belongs to the PPR family. P subfamily. In terms of assembly, component of the mitochondrial ribosome small subunit.

The protein resides in the mitochondrion. The protein is Small ribosomal subunit protein mS80 (rPPR6) of Arabidopsis thaliana (Mouse-ear cress).